Consider the following 397-residue polypeptide: Tyrosine--tRNA ligase (397 aa).

Positions 39–48 match the 'HIGH' region motif; that stretch reads PTAPDLHLGH. The 'KMSKS' region motif lies at 223–227; that stretch reads KMSKS. Residue lysine 226 participates in ATP binding. An S4 RNA-binding domain is found at 334 to 395; it reads YPIANLVHDL…GKRKFAKIRL (62 aa).

The protein belongs to the class-I aminoacyl-tRNA synthetase family. TyrS type 2 subfamily. In terms of assembly, homodimer.

The protein localises to the cytoplasm. It catalyses the reaction tRNA(Tyr) + L-tyrosine + ATP = L-tyrosyl-tRNA(Tyr) + AMP + diphosphate + H(+). Its function is as follows. Catalyzes the attachment of tyrosine to tRNA(Tyr) in a two-step reaction: tyrosine is first activated by ATP to form Tyr-AMP and then transferred to the acceptor end of tRNA(Tyr). The protein is Tyrosine--tRNA ligase of Methylococcus capsulatus (strain ATCC 33009 / NCIMB 11132 / Bath).